The following is a 158-amino-acid chain: 3-dehydroquinate dehydratase (158 aa).

Tyrosine 24 functions as the Proton acceptor in the catalytic mechanism. Positions 75, 81, and 88 each coordinate substrate. Catalysis depends on histidine 101, which acts as the Proton donor. Substrate-binding positions include 102 to 103 (LS) and arginine 112.

It belongs to the type-II 3-dehydroquinase family. As to quaternary structure, homododecamer.

The enzyme catalyses 3-dehydroquinate = 3-dehydroshikimate + H2O. It functions in the pathway metabolic intermediate biosynthesis; chorismate biosynthesis; chorismate from D-erythrose 4-phosphate and phosphoenolpyruvate: step 3/7. In terms of biological role, catalyzes a trans-dehydration via an enolate intermediate. The sequence is that of 3-dehydroquinate dehydratase from Bartonella bacilliformis (strain ATCC 35685 / KC583 / Herrer 020/F12,63).